The following is a 163-amino-acid chain: Ribosome maturation factor RimP (163 aa).

It belongs to the RimP family.

The protein localises to the cytoplasm. Its function is as follows. Required for maturation of 30S ribosomal subunits. The sequence is that of Ribosome maturation factor RimP from Streptococcus mutans serotype c (strain ATCC 700610 / UA159).